Consider the following 4128-residue polypeptide: DNA-dependent protein kinase catalytic subunit (4128 aa).

Lys117 is subject to N6-acetyllysine. An HEAT 1 repeat occupies Asp288–Val323. A phosphoserine mark is found at Ser511 and Ser687. N6-acetyllysine is present on Lys828. Phosphoserine is present on residues Ser841 and Ser893. One copy of the HEAT 2 repeat lies at Gln1004–Ser1040. Ser1065 bears the Phosphoserine mark. Residue Lys1209 is modified to N6-acetyllysine. An interaction with C1D region spans residues Leu1503–Leu1538. Positions Leu1503–Leu1538 are leucine-zipper. The stretch at Pro1723 to Pro1756 is one TPR 1 repeat. Lys1970 bears the N6-acetyllysine mark. The interval Gln2050 to Asp2073 is disordered. At Ser2056 the chain carries Phosphoserine; by autocatalysis. The residue at position 2259 (Lys2259) is an N6-acetyllysine. The interval Leu2436–Gly3212 is KIP-binding. At Thr2535 the chain carries Phosphothreonine. Thr2609 carries the phosphothreonine; by autocatalysis modification. The residue at position 2612 (Ser2612) is a Phosphoserine; by autocatalysis. A phosphothreonine; by autocatalysis mark is found at Thr2638 and Thr2647. A may split the end of the DNA molecule, with the two strands separating around the region region spans residues Glu2737–Gln2765. The residue at position 2789 (Ser2789) is a Phosphoserine. Residues Pro2906 to Ser3539 enclose the FAT domain. TPR repeat units lie at residues Val2920–Gly2948 and Thr2949–Val2982. The segment at Leu3200–Glu3222 is disordered. Ser3205 is modified (phosphoserine). 5 positions are modified to N6-acetyllysine: Lys3241, Lys3260, Lys3621, Lys3638, and Lys3642. Residues Phe3722 to Gly4053 enclose the PI3K/PI4K catalytic domain. The tract at residues Val3728–Arg3734 is G-loop. Ser3731 and Ser3821 each carry phosphoserine. The segment at Gly3919–Asn3927 is catalytic loop. An activation loop region spans residues Gly3939–Thr3964. Ser4026 is modified (phosphoserine). In terms of domain architecture, FATC spans Ser4096 to Met4128.

The protein belongs to the PI3/PI4-kinase family. As to quaternary structure, DNA-PK is a heterotrimer of PRKDC and the Ku dimer (composed of XRCC6/Ku70 and XRCC5/Ku86). Formation of this complex may be promoted by interaction with ILF3. Component of the core long-range non-homologous end joining (NHEJ) complex (also named DNA-PK complex) composed of PRKDC, LIG4, XRCC4, XRCC6/Ku70, XRCC5/Ku86 and NHEJ1/XLF. Additional component of the NHEJ complex includes PAXX. Following autophosphorylation, PRKDC dissociates from DNA. Interacts with DNA-PKcs-interacting protein (KIP) with the region upstream the kinase domain. PRKDC alone also interacts with and phosphorylates DCLRE1C, thereby activating the latent endonuclease activity of this protein. Interacts with C1D. Interacts with TTI1 and TELO2. Interacts with CIB1. Interacts with SETX. Interacts with NR4A3; the DNA-dependent protein kinase complex DNA-PK phosphorylates and activates NR4A3 and prevents NR4A3 ubiquitination and degradation. Interacts with BRAT1. Part of the HDP-RNP complex composed of at least HEXIM1, PRKDC, XRCC5, XRCC6, paraspeckle proteins (SFPQ, NONO, PSPC1, RBM14, and MATR3) and NEAT1 RNA. Interacts with KAT5. Post-translationally, autophosphorylated at two clusters, the T2609 cluster and the S2056 cluster. Autophosphorylated on Ser-2056, Thr-2609, Thr-2638 and Thr-2647. Ser-2056 and Thr-2609 are DNA damage-inducible phosphorylation sites (inducible with ionizing radiation, IR) dephosphorylated by PPP5C. Autophosphorylation induces a conformational change that leads to remodeling of the DNA-PK complex, requisite for efficient end processing and DNA repair. Autophosphorylation in trans within DNA-PK complexes loaded on DNA ends leads to the dissociation of PRKDC from DNA and the transition into the short-range NHEJ complex. Autophosphorylation of the T2609 cluster is required for hematopoietic development and protein synthesis in erythrocytes precursors. S-nitrosylated by GAPDH. In terms of processing, polyubiquitinated by RNF144A, leading to proteasomal degradation.

It localises to the nucleus. The protein localises to the nucleolus. The protein resides in the cytoplasm. It is found in the cytosol. The enzyme catalyses L-seryl-[protein] + ATP = O-phospho-L-seryl-[protein] + ADP + H(+). It catalyses the reaction L-threonyl-[protein] + ATP = O-phospho-L-threonyl-[protein] + ADP + H(+). With respect to regulation, activity seems to be attenuated by autophosphorylation. Binding to the SL1 region of U3 small nucleolar RNA promotes auto-phosphorylation activity. Inhibited by wortmannin. In terms of biological role, serine/threonine-protein kinase that acts as a molecular sensor for DNA damage. Involved in DNA non-homologous end joining (NHEJ) required for double-strand break (DSB) repair and V(D)J recombination. Must be bound to DNA to express its catalytic properties. Promotes processing of hairpin DNA structures in V(D)J recombination by activation of the hairpin endonuclease artemis (DCLRE1C). Recruited by XRCC5 and XRCC6 to DNA ends and is required to (1) protect and align broken ends of DNA, thereby preventing their degradation, (2) and sequester the DSB for repair by NHEJ. Acts as a scaffold protein to aid the localization of DNA repair proteins to the site of damage. The assembly of the DNA-PK complex at DNA ends is also required for the NHEJ ligation step. Found at the ends of chromosomes, suggesting a further role in the maintenance of telomeric stability and the prevention of chromosomal end fusion. Also involved in modulation of transcription. As part of the DNA-PK complex, involved in the early steps of ribosome assembly by promoting the processing of precursor rRNA into mature 18S rRNA in the small-subunit processome. Binding to U3 small nucleolar RNA, recruits PRKDC and XRCC5/Ku86 to the small-subunit processome. Recognizes the substrate consensus sequence [ST]-Q. Phosphorylates 'Ser-139' of histone variant H2AX, thereby regulating DNA damage response mechanism. Phosphorylates ASF1A, DCLRE1C, c-Abl/ABL1, histone H1, HSPCA, c-jun/JUN, p53/TP53, PARP1, POU2F1, DHX9, FH, SRF, NHEJ1/XLF, XRCC1, XRCC4, XRCC5, XRCC6, WRN, MYC and RFA2. Can phosphorylate C1D not only in the presence of linear DNA but also in the presence of supercoiled DNA. Ability to phosphorylate p53/TP53 in the presence of supercoiled DNA is dependent on C1D. Acts as a regulator of the phosphatidylinositol 3-kinase/protein kinase B signal transduction by mediating phosphorylation of 'Ser-473' of protein kinase B (PKB/AKT1, PKB/AKT2, PKB/AKT3), promoting their activation. Contributes to the determination of the circadian period length by antagonizing phosphorylation of CRY1 'Ser-588' and increasing CRY1 protein stability, most likely through an indirect mechanism. Plays a role in the regulation of DNA virus-mediated innate immune response by assembling into the HDP-RNP complex, a complex that serves as a platform for IRF3 phosphorylation and subsequent innate immune response activation through the cGAS-STING pathway. Also regulates the cGAS-STING pathway by catalyzing phosphorylation of CGAS, thereby impairing CGAS oligomerization and activation. Also regulates the cGAS-STING pathway by mediating phosphorylation of PARP1. The chain is DNA-dependent protein kinase catalytic subunit (PRKDC) from Homo sapiens (Human).